Reading from the N-terminus, the 341-residue chain is Phosphoribosylformylglycinamidine cyclo-ligase (341 aa).

The protein belongs to the AIR synthase family.

The protein localises to the cytoplasm. The enzyme catalyses 2-formamido-N(1)-(5-O-phospho-beta-D-ribosyl)acetamidine + ATP = 5-amino-1-(5-phospho-beta-D-ribosyl)imidazole + ADP + phosphate + H(+). It participates in purine metabolism; IMP biosynthesis via de novo pathway; 5-amino-1-(5-phospho-D-ribosyl)imidazole from N(2)-formyl-N(1)-(5-phospho-D-ribosyl)glycinamide: step 2/2. The protein is Phosphoribosylformylglycinamidine cyclo-ligase of Xanthomonas axonopodis pv. citri (strain 306).